A 566-amino-acid polypeptide reads, in one-letter code: MNVFVLTFFICIIYLLFDLIKKNKKLKDEPPTPKLALPLIGHLYLLGDRPNRSFLELSKRYGGIFKIWMGEYPTVVLTDPDHVNEVWCKQFLNFTNRPHFNSLDQFSSGFRNLSFSDYPLWSELRKLVSSSFTKSKVKGISNLLETQTNYLINTMNNYSINNKPFNPKKYIHKLTLNVVCMIAFSKEIKNDEDVNEGDMARLTKPKEMILKHLGSSNFCDFVPLVRPLFYLKNKRFDQTLKQVREYIKEIYDDHLLNLDLNSPPKDIMDLLIMSTNDSKEDIIIQTCIDFLIAGSDTVGVTIEWFLVYISNNPIIQEKCFNELFNAFSNSNNTDNNNNNSTITTAIGFGDEYSSKTPFLNACIKEVLRIKPVTSLGLPRIANDDTFVNGYRIPKGTQIIENIYGLSNSDQLIDDPTTFNPYRWLEYQKLKSFQNDLKQQQQQQQQQQQQQQQLQLQQEQQEQEQQKINLEFNNNNNNNNNNNNNNSNNKHKYYNDLDKISIPFSTGRRGCVGVQLGEAELYIVCANLVYNFKIESWDGKKINELEDFGIIIHPSSHNLKITKRNNK.

The chain crosses the membrane as a helical span at residues 1 to 21; sequence MNVFVLTFFICIIYLLFDLIK. The interval 471 to 491 is disordered; the sequence is FNNNNNNNNNNNNNNSNNKHK. Over residues 472-487 the composition is skewed to low complexity; sequence NNNNNNNNNNNNNNSN. Heme is bound at residue Cys-510.

It belongs to the cytochrome P450 family. Requires heme as cofactor.

It localises to the membrane. The sequence is that of Probable cytochrome P450 519D1 (cyp519D1) from Dictyostelium discoideum (Social amoeba).